A 1530-amino-acid polypeptide reads, in one-letter code: Neurexin-1 (1530 aa).

Positions 1-30 are cleaved as a signal peptide; sequence MGTALVQHGGCCLLCLSLLLLGCWAELGSG. A Laminin G-like 1 domain is found at 31–217; that stretch reads LEFPGAEGQW…PPNSGGGSPC (187 aa). Residues 31–1454 are Extracellular-facing; the sequence is LEFPGAEGQW…EVIRESSSTT (1424 aa). 2 N-linked (GlcNAc...) asparagine glycosylation sites follow: N125 and N190. Residues 196 to 219 are disordered; the sequence is PVDGSEVKLDEEPPNSGGGSPCEA. The region spanning 213–255 is the EGF-like 1 domain; it reads GGSPCEAGDEGDGGVCLNGGVCSVVDDQAVCDCSRTGFRGKDC. 2 disulfide bridges follow: C228-C243 and C245-C255. Laminin G-like domains follow at residues 299–496 and 503–695; these read IATF…AFKC and DPIT…KPSC. The Ca(2+) site is built by D345, L362, and M430. 5 cysteine pairs are disulfide-bonded: C460/C496, C666/C695, C703/C714, C708/C723, and C725/C735. Residues 699 to 736 enclose the EGF-like 2 domain; the sequence is TAKPCLSNPCKNNGMCRDGWNRYVCDCSGTGYLGRSCE. Laminin G-like domains are found at residues 741–914 and 928–1103; these read VLSY…IDYC and DPVT…ERGC. Ca(2+) is bound by residues D788 and L805. An N-linked (GlcNAc...) asparagine glycan is attached at N813. R864 contacts Ca(2+). 5 cysteine pairs are disulfide-bonded: C906–C914, C1075–C1103, C1110–C1121, C1115–C1130, and C1132–C1142. One can recognise an EGF-like 3 domain in the interval 1106 to 1143; it reads PSTTCQEDSCSNQGVCLQQWDGFSCDCSMTSFSGPLCN. A Laminin G-like 6 domain is found at 1149–1347; the sequence is YIFSKGGGQI…DANIAIVGNV (199 aa). Ca(2+) contacts are provided by D1199 and V1216. N-linked (GlcNAc...) asparagine glycosylation occurs at N1246. 2 residues coordinate Ca(2+): I1298 and N1300. Residue S1408 is glycosylated (O-linked (Xyl...) (heparan sulfate) serine). Residues 1412 to 1443 form a disordered region; that stretch reads PSDDEDIDPCEPSSGGLANPTRVGGREPYPGS. Residues 1455–1475 traverse the membrane as a helical segment; it reads GMVVGIVAAAALCILILLYAM. At 1476–1530 the chain is on the cytoplasmic side; the sequence is YKYRNRDEGSYHVDESRNYISNSAQSNGAVVKEKQPSSAKSANKNKKNKDKEYYV. Residues 1497–1523 are interaction with CASK; that stretch reads NSAQSNGAVVKEKQPSSAKSANKNKKN. The segment at 1497 to 1530 is disordered; sequence NSAQSNGAVVKEKQPSSAKSANKNKKNKDKEYYV.

The protein belongs to the neurexin family. Interacts (via laminin G-like domain 2 and/or laminin G-like domain 6) with NLGN1 forming a heterotetramer, where one NLGN1 dimer interacts with one NRXN1 dimer. Also interacts (via laminin G-like domain 2 and/or laminin G-like domain 6) with NLGN2, NLGN3 and NLGN4L; interactions with NLGN1, NLGN2, NLGN3 and NLGN4L are calcium-dependent. Interacts (via cytoplasmic C-terminal region) with CASK (via the PDZ, SH3 and guanylate kinase-like domains). Interacts (via cytoplasmic C-terminus) with CASKIN1 and APBA1. Interacts (via laminin G-like domain 2) with NXPH1 and NXPH3. Alpha-type isoforms (neurexin-1-alpha) interact (via laminin G-like domain 2 and/or laminin G-like domain 6) with DAG1 (via alpha-dystroglycan chain). Interacts with LRRTM1, LRRTM2, LRRTM3 and LRRTM4. Interacts with SYT13 and SYTL1. Interacts with CBLN1, CBLN2 and, less avidly, with CBLN4. Interacts with CLSTN3. Alpha-type isoforms interact with alpha-latrotoxin from spider venom. In terms of processing, O-glycosylated; contains heparan sulfate. Heparan sulfate attachment is required for synapse development by mediating interactions with neuroligins and LRRTM2. As to expression, brain (neuronal synapse).

It is found in the presynaptic cell membrane. Its function is as follows. Cell surface protein involved in cell-cell-interactions, exocytosis of secretory granules and regulation of signal transmission. Function is isoform-specific. Alpha-type isoforms have a long N-terminus with six laminin G-like domains and play an important role in synaptic signal transmission. Alpha-type isoforms play a role in the regulation of calcium channel activity and Ca(2+)-triggered neurotransmitter release at synapses and at neuromuscular junctions. They play an important role in Ca(2+)-triggered exocytosis of secretory granules in pituitary gland. They may affect their functions at synapses and in endocrine cells via their interactions with proteins from the exocytotic machinery. Likewise, alpha-type isoforms play a role in regulating the activity of postsynaptic NMDA receptors, a subtype of glutamate-gated ion channels. Both alpha-type and beta-type isoforms may play a role in the formation or maintenance of synaptic junctions via their interactions (via the extracellular domains) with neuroligin family members, CBLN1 or CBLN2. In vitro, triggers the de novo formation of presynaptic structures. May be involved in specification of excitatory synapses. Alpha-type isoforms were first identified as receptors for alpha-latrotoxin from spider venom. The polypeptide is Neurexin-1 (Nrxn1) (Rattus norvegicus (Rat)).